The sequence spans 734 residues: 1,4-alpha-glucan branching enzyme GlgB (734 aa).

Catalysis depends on Asp-414, which acts as the Nucleophile. Glu-467 functions as the Proton donor in the catalytic mechanism.

The protein belongs to the glycosyl hydrolase 13 family. GlgB subfamily. Monomer.

It catalyses the reaction Transfers a segment of a (1-&gt;4)-alpha-D-glucan chain to a primary hydroxy group in a similar glucan chain.. Its pathway is glycan biosynthesis; glycogen biosynthesis. Its function is as follows. Catalyzes the formation of the alpha-1,6-glucosidic linkages in glycogen by scission of a 1,4-alpha-linked oligosaccharide from growing alpha-1,4-glucan chains and the subsequent attachment of the oligosaccharide to the alpha-1,6 position. In Myxococcus xanthus (strain DK1622), this protein is 1,4-alpha-glucan branching enzyme GlgB.